The following is a 186-amino-acid chain: Akirin-1 (186 aa).

The tract at residues Met1 to Arg64 is disordered. The short motif at Pro22–Cys27 is the Nuclear localization signal element. A compositionally biased stretch (low complexity) spans Gln49–Gly60. The SYVS motif signature appears at Ser183–Ser186.

It belongs to the akirin family.

The protein resides in the nucleus. Its function is as follows. Molecular adapter that acts as a bridge between proteins, and which is involved skeletal muscle development. Functions as a signal transducer for MSTN during skeletal muscle regeneration and myogenesis. This chain is Akirin-1, found in Xenopus tropicalis (Western clawed frog).